An 84-amino-acid polypeptide reads, in one-letter code: Agaphelin (84 aa).

Residues methionine 1–alanine 26 form the signal peptide. Positions asparagine 29–glycine 82 constitute a Kazal-like domain. Disulfide bonds link cysteine 35-cysteine 60, cysteine 37-cysteine 56, and cysteine 45-cysteine 80. N-linked (GlcNAc...) asparagine glycosylation occurs at asparagine 49.

In terms of assembly, interacts with human ELANE.

It is found in the secreted. Functions as a slow and tight inhibitor of host neutrophil elastase (ELANE). Inhibits host proteinase 3 (PRTN3) and chymotrypsin. Does not inhibit other host proteases involved in coagulation or inflammation, such as cathepsin G (CTSG), trypsin, chymase, matriptase, beta-tryptase, kallikrein, urokinase-type plasminogen activator (PLAU), coagulation factors Xa (F10), XIa (F11), XIIa (F12), plasmin (PLG), thrombin (F2) and tissue-type plasminogen activator (PLAT). Inhibits host neutrophil chemotaxis induced by N-formylmethionine-leucyl-phenylalanine (fMLP) in vitro. Inhibits ELANE-mediated potentiation of platelet aggregation induced by CTSG in the host. Does not affect CTSG- or collagen-induced platelet aggregation. Blocks cleavage of tissue factor pathway inhibitor (TFPI) by ELANE in the host. Inhibits neutrophil-induced coagulation in the host by interfering with neutrophil extracellular traps (NET) formation. Exhibits anti-inflammatory activity. Reduces ischemia-induced activation of MAPK and NF-kappa-B pathways in the host. Decreases CCL2 and IL8 production in IL4- or lipopolysaccharide (LPS)-stimulated host epithelial cells. Reduces caspase-3 (CASP3)-dependent apoptosis in damaged host tissues. This Anopheles gambiae (African malaria mosquito) protein is Agaphelin.